A 1172-amino-acid chain; its full sequence is MATSLSSAPTQLRPSPSPSHHRLLHRSSLLPFPRRHHHRRRRCGALSIARASASAKDGVTVRRFPAAPTEGGRLAGVRKIMILGAGPIVIGQACEFDYSGTQACKALAEEGYEVVLVNSNPATIMTDPDLAHRTYIGPMTPPLVERIIAAERPDALLPTMGGQTALNLAVSLADSGALDRLGVRLIGASLPAIRAAEDRQLFKQAMDRIGLKTPPSGIGTTLEECISIAEDIGEFPLIVRPAFTLGGTGGGIAYNRAEFEDICRAGLAASHTQQVLVEKSLLGWKEYELEVMRDMADNVVIICSIENIDPMGVHTGDSITVAPAQTLTDKEYQRLRDYSVAIIREIGVECGGSNVQFAVNPADGEVMVIEMNPRVSRSSALASKATGFPIAKMAAKLSVGYTLDQIPNDITKKTPASFEPSIDYVVTKIPRFAFEKFPGSEPVLTTQMKSVGEAMALGRTFQESFQKAVRSLETGFAGWGCAPIKELDWDWEKLKYSLRVPNPDRIHAIYAAFKKGMRIQDIHEISFIDKWFLTELKELVDVEQFLISRGLDQLSKDDFYQVKRRGFSDTQIAFATSSSETDVRLRRLALEVAPTYKRVDTCAAEFEANTPYMYSSYEYECESVPTNKKKVLILGGGPNRIGQGIEFDYCCCHASFALREAGYETIMMNSNPETVSTDYDTSDRLYFEPLTVEDVTNVIDLERPDGIIVQFGGQTPLKLALPIQQYLEDKKLVSASGTGLVKIWGTSPDSIDAAEDRKRFNAILEELGIEQPKGGIARSESDALSIASEVGYPVVVRPSYVLGGRAMEIVYNDEKLIKYLATAVQVDPERPVLVDKYLIDAIEIDVDALADSVGNVVIGGIMEHIEQAGIHSGDSACSLPTRTVSAKCLDIIRSWTTKLAKRLNVCGLMNCQYAITTSGEVFLLEANPRASRTVPFVSKAIGHPLAKYASLVMSGVTLPELGYTQEVVPKHVSVKEAVLPFEKFQGCDILLGPEMRSTGEVMGIDYEFSGAFAKAQIAAGQKLPLNGTVFLSLNDLTKRHLAEIGRGFRELGFNIIATSGTAKVLQLEGIPVEPVLKIHEGRPNARDMLKNGQIQVMVITSSGDALDSKDGLQLRRLALAYKVPIITTVDGARATIDAIKSLKNKSIETLALQDYFQTTDASQNLQAAQSAS.

A compositionally biased stretch (polar residues) spans 1–10 (MATSLSSAPT). Residues 1–37 (MATSLSSAPTQLRPSPSPSHHRLLHRSSLLPFPRRHH) are disordered. Residues 1–50 (MATSLSSAPTQLRPSPSPSHHRLLHRSSLLPFPRRHHHRRRRCGALSIAR) constitute a chloroplast transit peptide. Positions 72 to 473 (GRLAGVRKIM…SFQKAVRSLE (402 aa)) are carboxyphosphate synthetic domain. ATP is bound by residues Arg-199, Arg-240, Gly-246, Gly-247, Lys-279, Leu-281, Glu-286, Gly-312, Val-313, His-314, Gln-356, and Glu-370. The ATP-grasp 1 domain maps to 203–399 (KQAMDRIGLK…IAKMAAKLSV (197 aa)). Residues Gln-356, Glu-370, and Asn-372 each contribute to the Mg(2+) site. The tract at residues 474–623 (TGFAGWGCAP…YSSYEYECES (150 aa)) is oligomerization domain. The tract at residues 624-1019 (VPTNKKKVLI…GAFAKAQIAA (396 aa)) is carbamoyl phosphate synthetic domain. The ATP-grasp 2 domain occupies 761 to 954 (NAILEELGIE…LAKYASLVMS (194 aa)). 10 residues coordinate ATP: Arg-797, Lys-836, Leu-838, Glu-843, Gly-869, Ile-870, His-871, Ser-872, Gln-912, and Glu-925. Residues Gln-912, Glu-925, and Asn-927 each coordinate Mg(2+). Positions 1020–1172 (GQKLPLNGTV…QNLQAAQSAS (153 aa)) are allosteric domain. One can recognise an MGS-like domain in the interval 1021 to 1162 (QKLPLNGTVF…QDYFQTTDAS (142 aa)).

The protein belongs to the CarB family. As to quaternary structure, heterodimer composed of 2 chains; the small (or glutamine) chain promotes the hydrolysis of glutamine to ammonia, which is used by the large (or ammonia) chain to synthesize carbamoyl phosphate. The cofactor is Mg(2+). Mn(2+) is required as a cofactor.

The protein resides in the plastid. It is found in the chloroplast. It catalyses the reaction hydrogencarbonate + L-glutamine + 2 ATP + H2O = carbamoyl phosphate + L-glutamate + 2 ADP + phosphate + 2 H(+). It carries out the reaction hydrogencarbonate + NH4(+) + 2 ATP = carbamoyl phosphate + 2 ADP + phosphate + 2 H(+). It functions in the pathway amino-acid biosynthesis; L-arginine biosynthesis; carbamoyl phosphate from bicarbonate: step 1/1. Large subunit of the arginine-specific carbamoyl phosphate synthase (CPSase). CPSase catalyzes the formation of carbamoyl phosphate from the ammonia moiety of glutamine, hydrogencarbonate, and phosphate donated by ATP, constituting the first step of 2 biosynthetic pathways, one leading to arginine and/or urea and the other to pyrimidine nucleotides. The large subunit (synthetase) binds the substrates ammonia (free or transferred from glutamine from the small subunit), hydrogencarbonate and ATP and carries out an ATP-coupled ligase reaction, activating hydrogencarbonate by forming carboxy phosphate which reacts with ammonia to form carbamoyl phosphate. The protein is Carbamoyl phosphate synthase arginine-specific large chain, chloroplastic (CARB) of Oryza sativa subsp. japonica (Rice).